The sequence spans 387 residues: Synaptotagmin-8 (387 aa).

The Extracellular segment spans residues 1–34; the sequence is MGHPPVSPSAPAPAGTTAIPGLIPDLVAGTPWPR. The helical; Signal-anchor for type III membrane protein transmembrane segment at 35-55 threads the bilayer; the sequence is WALIAGALAAGVLLVSCLLCA. Topologically, residues 56–387 are cytoplasmic; it reads ACCCCRRHRK…LRLRLPLPHS (332 aa). A disordered region spans residues 70–99; sequence KESVGLGSARGTTTTHLVQPDVDGLESSPG. C2 domains lie at 103 to 219 and 231 to 346; these read QWGC…EHWY and QVGE…QHWA.

Belongs to the synaptotagmin family. As to quaternary structure, homodimer or homooligomer. Homodimerization and homooligomerization do not depend on Ca(2+). Interacts with SYNCRIP isoform 2 C-terminus. Binds inositol 1,3,4,5-tetrakisphosphate (IP4). Binds to AP2 in a Ca(2+)-independent manner. Interacts with STX1A, STX1B and STX2; the interaction is Ca(2+)-dependent.

The protein localises to the cell membrane. The protein resides in the cytoplasmic vesicle. Its subcellular location is the secretory vesicle. It is found in the acrosome. Functionally, involved in the trafficking and exocytosis of secretory vesicles in non-neuronal tissues. Mediates Ca(2+)-regulation of exocytosis acrosomal reaction in sperm. May mediate Ca(2+)-regulation of exocytosis in insulin secreted cells. The sequence is that of Synaptotagmin-8 (SYT8) from Homo sapiens (Human).